A 144-amino-acid polypeptide reads, in one-letter code: Cytochrome c oxidase subunit 4 isoform 1, mitochondrial (144 aa).

Residues 1–73 lie on the Mitochondrial matrix side of the membrane; the sequence is SVVKSEDFSL…SFAEMNRGSN (73 aa). K4 is modified (N6-acetyllysine; alternate). The residue at position 4 (K4) is an N6-succinyllysine; alternate. K28 bears the N6-acetyllysine mark. A phosphoserine mark is found at S31 and S33. Position 35 is an N6-acetyllysine; alternate (K35). Position 35 is an N6-succinyllysine; alternate (K35). The residue at position 42 (K42) is an N6-acetyllysine. The helical transmembrane segment at 74–99 threads the bilayer; sequence EWKTVVGGAMFFIGFTALIIMWQKHY. Over 100–144 the chain is Mitochondrial intermembrane; the sequence is VYGPLPQTFDKEWVGKQTKRMLDMKVNPIQGLASKWDYEKNEWKK.

This sequence belongs to the cytochrome c oxidase IV family. Component of the cytochrome c oxidase (complex IV, CIV), a multisubunit enzyme composed of 14 subunits. The complex is composed of a catalytic core of 3 subunits MT-CO1, MT-CO2 and MT-CO3, encoded in the mitochondrial DNA, and 11 supernumerary subunits COX4I, COX5A, COX5B, COX6A, COX6B, COX6C, COX7A, COX7B, COX7C, COX8 and NDUFA4, which are encoded in the nuclear genome. The complex exists as a monomer or a dimer and forms supercomplexes (SCs) in the inner mitochondrial membrane with NADH-ubiquinone oxidoreductase (complex I, CI) and ubiquinol-cytochrome c oxidoreductase (cytochrome b-c1 complex, complex III, CIII), resulting in different assemblies (supercomplex SCI(1)III(2)IV(1) and megacomplex MCI(2)III(2)IV(2)). Interacts with PHB2; the interaction decreases in absence of SPHK2. Interacts with AFG1L. Interacts with ABCB7; this interaction allows the regulation of cellular iron homeostasis and cellular reactive oxygen species (ROS) levels in cardiomyocytes. Interacts with FLVCR2; this interaction occurs in the absence of heme and is disrupted upon heme binding. Interacts with IRGC.

The protein localises to the mitochondrion inner membrane. It participates in energy metabolism; oxidative phosphorylation. Its function is as follows. Component of the cytochrome c oxidase, the last enzyme in the mitochondrial electron transport chain which drives oxidative phosphorylation. The respiratory chain contains 3 multisubunit complexes succinate dehydrogenase (complex II, CII), ubiquinol-cytochrome c oxidoreductase (cytochrome b-c1 complex, complex III, CIII) and cytochrome c oxidase (complex IV, CIV), that cooperate to transfer electrons derived from NADH and succinate to molecular oxygen, creating an electrochemical gradient over the inner membrane that drives transmembrane transport and the ATP synthase. Cytochrome c oxidase is the component of the respiratory chain that catalyzes the reduction of oxygen to water. Electrons originating from reduced cytochrome c in the intermembrane space (IMS) are transferred via the dinuclear copper A center (CU(A)) of subunit 2 and heme A of subunit 1 to the active site in subunit 1, a binuclear center (BNC) formed by heme A3 and copper B (CU(B)). The BNC reduces molecular oxygen to 2 water molecules using 4 electrons from cytochrome c in the IMS and 4 protons from the mitochondrial matrix. The sequence is that of Cytochrome c oxidase subunit 4 isoform 1, mitochondrial (COX4I1) from Hylobates agilis (Agile gibbon).